We begin with the raw amino-acid sequence, 378 residues long: MKHSVHFGAGNIGRGFIGEILFKNGFHIDFVDVNNQIIHALNEKGKYEIEIAQKGQSRIEVTNVAGINSKEHPEQVIEAIQKTDIITTAIGPNILPFIAELLAKGIEARRVAGNTQALDVMACENMIGGSQFLYQEVKKYLSPEGLTFADNYIGFPNAAVDRIVPAQSHEDSLFVVVEPFNEWVVETKRLKNPDLRLEDVHYEEDLEPFIERKLFSVNSGHATSAYIGAHYGAKTILEALQNPNIKSRIESVLAEIRSLLIAKWNFDKKELENYHKVIIERFENPFIVDEVSRVARTPIRKLGYNERFIRPIRELKELSLSYKNLLKTVGYAFDYRDVNDEESIRLGELLAIQSVKDVVIQVTGLDDQELIEQIVEYI.

4 to 15 (SVHFGAGNIGRG) contributes to the NAD(+) binding site.

This sequence belongs to the mannitol dehydrogenase family.

The enzyme catalyses D-mannitol 1-phosphate + NAD(+) = beta-D-fructose 6-phosphate + NADH + H(+). This Streptococcus pneumoniae (strain Hungary19A-6) protein is Mannitol-1-phosphate 5-dehydrogenase.